The chain runs to 270 residues: 5'-nucleotidase SurE (270 aa).

Asp14, Asp15, Ser46, and Asn104 together coordinate a divalent metal cation.

Belongs to the SurE nucleotidase family. The cofactor is a divalent metal cation.

It localises to the cytoplasm. It carries out the reaction a ribonucleoside 5'-phosphate + H2O = a ribonucleoside + phosphate. Its function is as follows. Nucleotidase that shows phosphatase activity on nucleoside 5'-monophosphates. In Microcystis aeruginosa (strain NIES-843 / IAM M-2473), this protein is 5'-nucleotidase SurE.